The following is a 138-amino-acid chain: Large ribosomal subunit protein uL14 (138 aa).

This sequence belongs to the universal ribosomal protein uL14 family. In terms of assembly, part of the 50S ribosomal subunit. Forms a cluster with proteins L3 and L24e, part of which may contact the 16S rRNA in 2 intersubunit bridges.

Functionally, binds to 23S rRNA. Forms part of two intersubunit bridges in the 70S ribosome. In Sulfurisphaera tokodaii (strain DSM 16993 / JCM 10545 / NBRC 100140 / 7) (Sulfolobus tokodaii), this protein is Large ribosomal subunit protein uL14.